A 184-amino-acid polypeptide reads, in one-letter code: ATP-dependent protease subunit HslV (184 aa).

Residue Thr-12 is part of the active site. Na(+) is bound by residues Gly-167, Cys-170, and Thr-173.

Belongs to the peptidase T1B family. HslV subfamily. In terms of assembly, a double ring-shaped homohexamer of HslV is capped on each side by a ring-shaped HslU homohexamer. The assembly of the HslU/HslV complex is dependent on binding of ATP.

It localises to the cytoplasm. The catalysed reaction is ATP-dependent cleavage of peptide bonds with broad specificity.. Its activity is regulated as follows. Allosterically activated by HslU binding. Functionally, protease subunit of a proteasome-like degradation complex believed to be a general protein degrading machinery. This chain is ATP-dependent protease subunit HslV, found in Wolbachia sp. subsp. Drosophila simulans (strain wRi).